We begin with the raw amino-acid sequence, 1196 residues long: DNA excision repair protein ERCC-5 homolog (1196 aa).

The segment at 1–78 (MGVQGLWKLL…RIRPIFVFDG (78 aa)) is N-domain. Aspartate 30 provides a ligand contact to Mg(2+). Residues 31 to 67 (ISIWLNQAVKGARDRQGNAIQNAHLLTLFHRLCKLLF) are DNA-binding; may bind to the undamaged single-strand DNA of the DNA repair bubble. A Mg(2+)-binding site is contributed by aspartate 77. Positions 79–818 (EAPLLKRQTL…LQLFGIPYIV (740 aa)) are spacer region. Disordered stretches follow at residues 152–176 (PLEDNENNSSEEEEEREWEERMNQK), 302–321 (KQEEKKVDSPPQSITFNSSQ), 629–661 (QTTQPSGGSEVNKPAEYNPQDKKVFGSNDSSAM), and 722–758 (AVEEGNSGSQDIPLEHDSGEPHEQSNSEESKDLDDVS). Residues 154 to 168 (EDNENNSSEEEEERE) show a composition bias toward acidic residues. Over residues 311 to 321 (PPQSITFNSSQ) the composition is skewed to polar residues. Residues 722-731 (AVEEGNSGSQ) show a composition bias toward polar residues. The segment covering 734–755 (PLEHDSGEPHEQSNSEESKDLD) has biased composition (basic and acidic residues). Residues 819-914 (APMEAEAQCA…VSAMEILNEF (96 aa)) are I-domain. Positions 822, 824, 843, and 845 each coordinate Mg(2+). The tract at residues 853 to 869 (HVYKNFFSQNKHVEYYQ) is DNA-binding; may bind to the undamaged single-strand DNA of the DNA repair bubble. The tract at residues 881 to 913 (RSKLINLAYLLGSDYTEGIPTVGYVSAMEILNE) is DNA-binding; H2TH (helix-2turn-helix) motif which binds double-stranded DNA. Position 894 (aspartate 894) interacts with Mg(2+). The tract at residues 945–951 (TKVKKKL) is DNA-binding; may bind double-stranded DNA. The interval 1075 to 1196 (CTNQRKGQKT…KTMKETVKRK (122 aa)) is disordered. The Nuclear localization signal 1 motif lies at 1079–1095 (RKGQKTNTKSQGTKRRK). Positions 1119–1130 (SSKAYSSDGSSS) are enriched in low complexity. Polar residues predominate over residues 1142 to 1158 (KQSQSGIVGRQKASNKV). The Nuclear localization signal 2 motif lies at 1179 to 1196 (FQGKKTKSKTMKETVKRK).

The protein belongs to the XPG/RAD2 endonuclease family. XPG subfamily. In terms of assembly, monomer. Homodimer. The cofactor is Mg(2+).

Its subcellular location is the nucleus. It localises to the chromosome. Its function is as follows. Single-stranded structure-specific DNA endonuclease involved in DNA excision repair. Makes the 3'incision in DNA nucleotide excision repair (NER). Binds and bends DNA repair bubble substrate and breaks base stacking at the single-strand/double-strand DNA junction of the DNA bubble. Plays a role in base excision repair (BER) by promoting the binding of DNA glycosylase to its substrate and increasing DNA glycosylase catalytic activity that removes oxidized pyrimidines from DNA. Involved in transcription-coupled nucleotide excision repair (TCR) which allows RNA polymerase II-blocking lesions to be rapidly removed from the transcribed strand of active genes. Required for DNA replication fork maintenance and preservation of genomic stability. Involved in homologous recombination repair (HRR) induced by DNA replication stress. During HRR, binds to the replication fork with high specificity and stabilizes it. In Xenopus laevis (African clawed frog), this protein is DNA excision repair protein ERCC-5 homolog (ercc5).